A 165-amino-acid chain; its full sequence is 3-isopropylmalate dehydratase small subunit (165 aa).

It belongs to the LeuD family. LeuD type 2 subfamily. As to quaternary structure, heterodimer of LeuC and LeuD.

The enzyme catalyses (2R,3S)-3-isopropylmalate = (2S)-2-isopropylmalate. It functions in the pathway amino-acid biosynthesis; L-leucine biosynthesis; L-leucine from 3-methyl-2-oxobutanoate: step 2/4. Its function is as follows. Catalyzes the isomerization between 2-isopropylmalate and 3-isopropylmalate, via the formation of 2-isopropylmaleate. This is 3-isopropylmalate dehydratase small subunit from Desulfovibrio desulfuricans (strain ATCC 27774 / DSM 6949 / MB).